The chain runs to 342 residues: Ribosomal RNA small subunit methyltransferase C (342 aa).

The protein belongs to the methyltransferase superfamily. RsmC family. In terms of assembly, monomer.

It is found in the cytoplasm. It carries out the reaction guanosine(1207) in 16S rRNA + S-adenosyl-L-methionine = N(2)-methylguanosine(1207) in 16S rRNA + S-adenosyl-L-homocysteine + H(+). Functionally, specifically methylates the guanine in position 1207 of 16S rRNA in the 30S particle. This chain is Ribosomal RNA small subunit methyltransferase C, found in Hahella chejuensis (strain KCTC 2396).